A 295-amino-acid polypeptide reads, in one-letter code: GTPase Era (295 aa).

Residues 7 to 176 (KTVSVCIIGR…ITSKAKIAPW (170 aa)) enclose the Era-type G domain. The tract at residues 15 to 22 (GRPNSGKS) is G1. GTP is bound at residue 15–22 (GRPNSGKS). The tract at residues 41 to 45 (QTTRS) is G2. A G3 region spans residues 62–65 (DTPG). GTP-binding positions include 62–66 (DTPGI) and 124–127 (NKIE). Residues 124-127 (NKIE) are G4. The segment at 152–154 (ISA) is G5. In terms of domain architecture, KH type-2 spans 204–281 (LQQELPYKLT…HLFLFVKVRE (78 aa)).

The protein belongs to the TRAFAC class TrmE-Era-EngA-EngB-Septin-like GTPase superfamily. Era GTPase family. Monomer.

The protein resides in the cytoplasm. It localises to the cell inner membrane. Its function is as follows. An essential GTPase that binds both GDP and GTP, with rapid nucleotide exchange. Plays a role in 16S rRNA processing and 30S ribosomal subunit biogenesis and possibly also in cell cycle regulation and energy metabolism. In Rickettsia canadensis (strain McKiel), this protein is GTPase Era.